The chain runs to 181 residues: Protein GrpE (181 aa).

Over residues methionine 1–valine 24 the composition is skewed to acidic residues. The segment at methionine 1–serine 26 is disordered.

Belongs to the GrpE family. As to quaternary structure, homodimer.

The protein resides in the cytoplasm. Participates actively in the response to hyperosmotic and heat shock by preventing the aggregation of stress-denatured proteins, in association with DnaK and GrpE. It is the nucleotide exchange factor for DnaK and may function as a thermosensor. Unfolded proteins bind initially to DnaJ; upon interaction with the DnaJ-bound protein, DnaK hydrolyzes its bound ATP, resulting in the formation of a stable complex. GrpE releases ADP from DnaK; ATP binding to DnaK triggers the release of the substrate protein, thus completing the reaction cycle. Several rounds of ATP-dependent interactions between DnaJ, DnaK and GrpE are required for fully efficient folding. The sequence is that of Protein GrpE from Rhizorhabdus wittichii (strain DSM 6014 / CCUG 31198 / JCM 15750 / NBRC 105917 / EY 4224 / RW1) (Sphingomonas wittichii).